The primary structure comprises 659 residues: Cysteine-rich receptor-like protein kinase 18 (659 aa).

An N-terminal signal peptide occupies residues 1–27 (MATKSCELVLCFFVFFVISFSAISVSA). Gnk2-homologous domains lie at 28–131 (QTCD…NRPF) and 137–250 (MDPL…VYPF). The Extracellular segment spans residues 28-287 (QTCDNTTGTF…KNDSRISGGK (260 aa)). N-linked (GlcNAc...) asparagine glycans are attached at residues Asn-32, Asn-57, Asn-152, Asn-162, Asn-179, Asn-180, Asn-197, Asn-275, and Asn-279. The chain crosses the membrane as a helical span at residues 288-308 (IAAIVVVTVVTIILVVLGFVI). The Cytoplasmic segment spans residues 309–659 (SNRRKQKQEM…EATITDVNPR (351 aa)). The Protein kinase domain occupies 339 to 611 (FSERNKLGKG…PTMSTIHQML (273 aa)). Residues 345–353 (LGKGGFGEV) and Lys-367 contribute to the ATP site. Tyr-412 carries the phosphotyrosine modification. Catalysis depends on Asp-464, which acts as the Proton acceptor. Ser-468 carries the post-translational modification Phosphoserine. A Phosphothreonine modification is found at Thr-504. Position 512 is a phosphotyrosine (Tyr-512).

The protein belongs to the protein kinase superfamily. Ser/Thr protein kinase family. CRK subfamily.

Its subcellular location is the membrane. The catalysed reaction is L-seryl-[protein] + ATP = O-phospho-L-seryl-[protein] + ADP + H(+). The enzyme catalyses L-threonyl-[protein] + ATP = O-phospho-L-threonyl-[protein] + ADP + H(+). This is Cysteine-rich receptor-like protein kinase 18 (CRK18) from Arabidopsis thaliana (Mouse-ear cress).